Here is a 461-residue protein sequence, read N- to C-terminus: Chromosomal replication initiator protein DnaA (461 aa).

The interval 1 to 87 is domain I, interacts with DnaA modulators; that stretch reads MAVSLWQQCI…IGSRPSAKPV (87 aa). The tract at residues 87 to 124 is domain II; it reads VVQATAAVRTSRPVTREVTKPSFNTPHAEPMANANHRS. The interval 99–125 is disordered; it reads PVTREVTKPSFNTPHAEPMANANHRSN. The interval 125–341 is domain III, AAA+ region; sequence NINPTYQFDN…GALNRVIANA (217 aa). The ATP site is built by Gly-169, Gly-171, Lys-172, and Thr-173. Positions 342 to 461 are domain IV, binds dsDNA; it reads NFTGRPITID…YANLIRTLSS (120 aa).

This sequence belongs to the DnaA family. In terms of assembly, oligomerizes as a right-handed, spiral filament on DNA at oriC.

The protein resides in the cytoplasm. Plays an essential role in the initiation and regulation of chromosomal replication. ATP-DnaA binds to the origin of replication (oriC) to initiate formation of the DNA replication initiation complex once per cell cycle. Binds the DnaA box (a 9 base pair repeat at the origin) and separates the double-stranded (ds)DNA. Forms a right-handed helical filament on oriC DNA; dsDNA binds to the exterior of the filament while single-stranded (ss)DNA is stabiized in the filament's interior. The ATP-DnaA-oriC complex binds and stabilizes one strand of the AT-rich DNA unwinding element (DUE), permitting loading of DNA polymerase. After initiation quickly degrades to an ADP-DnaA complex that is not apt for DNA replication. Binds acidic phospholipids. This chain is Chromosomal replication initiator protein DnaA, found in Shewanella pealeana (strain ATCC 700345 / ANG-SQ1).